Here is a 541-residue protein sequence, read N- to C-terminus: MAMNVSTTATTTASFASTSSMNNTAKILLITLFISIVSTVIKLQKRASYKKASKNFPLPPGPTPWPLIGNIPEMIRYRPTFRWIHQLMKDMNTDICLIRFGKTNVVPISCPVIAREILKKHDAVFSNRPKILCAKTMSGGYLTTIVVPYNDQWKKMRKVLTSEIISPARHKWLHDKRAEEADQLVFYINNQYKSNKNVNVRIAARHYGGNVIRKMMFSKRYFGKGMPDGGPGPEEIMHVDAIFTALKYLYGFCISDYLPFLEGLDLDGQEKIVLNANKTIRDLQNPLIEERIQQWRSGERKEMEDLLDVFITLQDSDGKPLLNPDEIKNQIAEIMIATIDNPANAVEWAMGELINQPELLAKATEELDRVVGKDRLVQESDIPNLNYVKACAREAFRLHPVAYFNVPHVAMEDAVIGDYFIPKGSWAILSRYGLGRNPKTWPDPLKYDPERHLNEGEVVLTEHDLRFVTFSTGRRGCVAALLGTTMITMMLARMLQCFTWTPPPNVTRIDLSENIDELTPATPITGFAKPRLAPHLYPTSP.

Residues 1–18 lie on the Cytoplasmic side of the membrane; sequence MAMNVSTTATTTASFAST. A helical membrane pass occupies residues 19–41; sequence SSMNNTAKILLITLFISIVSTVI. Topologically, residues 42–541 are lumenal; that stretch reads KLQKRASYKK…LAPHLYPTSP (500 aa). Residue N277 is glycosylated (N-linked (GlcNAc...) asparagine). Position 477 (C477) interacts with heme. The N-linked (GlcNAc...) asparagine glycan is linked to N505.

Belongs to the cytochrome P450 family. Requires heme as cofactor. As to expression, expressed in the epidermis, the next two cortex cell layers, the endodermis and the pericycle of leaf petioles. Strong expression around the laticifers among the phloem cells and in parenchymatic cells between the protoxylem and the metaxylem cells. In the leaves, preferentially expressed in the mesophyll cells adjacent to the epidermis.

Its subcellular location is the microsome membrane. It catalyses the reaction L-valine + 2 reduced [NADPH--hemoprotein reductase] + 2 O2 = (E)-2-methylpropanal oxime + 2 oxidized [NADPH--hemoprotein reductase] + CO2 + 3 H2O + 2 H(+). It carries out the reaction L-valine + reduced [NADPH--hemoprotein reductase] + O2 = N-hydroxy-L-valine + oxidized [NADPH--hemoprotein reductase] + H2O + 2 H(+). The catalysed reaction is N-hydroxy-L-valine + reduced [NADPH--hemoprotein reductase] + O2 = N,N-dihydroxy-L-valine + oxidized [NADPH--hemoprotein reductase] + H2O + H(+). The enzyme catalyses L-isoleucine + 2 reduced [NADPH--hemoprotein reductase] + 2 O2 = (1E,2S)-2-methylbutanal oxime + 2 oxidized [NADPH--hemoprotein reductase] + CO2 + 3 H2O + 2 H(+). It catalyses the reaction L-isoleucine + reduced [NADPH--hemoprotein reductase] + O2 = N-hydroxy-L-isoleucine + oxidized [NADPH--hemoprotein reductase] + H2O + 2 H(+). It carries out the reaction N-hydroxy-L-isoleucine + reduced [NADPH--hemoprotein reductase] + O2 = N,N-dihydroxy-L-isoleucine + oxidized [NADPH--hemoprotein reductase] + H2O + H(+). Involved in the biosynthesis of the cyanogenic glucosides linamarin and lotaustralin. Can use L-valine or L-isoleucine as substrate. Catalyzes multi-step reactions starting with two successive N-hydroxylations using L-valine and L-isoleucine as substrates leading to the formation of N,N-dihydroxy-L-valine and N,N-dihydroxy-L-isoleucine, respectively; following spontaneous reactions lead to the production of (E)-2-methylpropanal oxime and (1E,2S)-2-methylbutanal oxime, respectively. The polypeptide is Valine N-monooxygenase 2 (Manihot esculenta (Cassava)).